The following is a 424-amino-acid chain: Histidine--tRNA ligase (424 aa).

The protein belongs to the class-II aminoacyl-tRNA synthetase family. As to quaternary structure, homodimer.

The protein localises to the cytoplasm. The enzyme catalyses tRNA(His) + L-histidine + ATP = L-histidyl-tRNA(His) + AMP + diphosphate + H(+). The polypeptide is Histidine--tRNA ligase (Shigella boydii serotype 18 (strain CDC 3083-94 / BS512)).